The sequence spans 21 residues: Major outer membrane protein P44 (21 aa).

As to quaternary structure, monomer.

It is found in the cell outer membrane. The protein is Major outer membrane protein P44 of Mannheimia haemolytica (Pasteurella haemolytica).